The chain runs to 919 residues: uncharacterized protein (919 aa).

The segment covering 1-15 (MEALILLSSQQSGSI) has biased composition (low complexity). Disordered regions lie at residues 1 to 167 (MEAL…DLEN), 179 to 312 (RFKP…STPS), 415 to 491 (HIYE…RLSL), 553 to 739 (QQQQ…TIKP), 751 to 863 (THNE…NNII), and 883 to 906 (LNINHQDGPNSASSTPRLPTDHIN). Over residues 16–25 (KNNCASTSDI) the composition is skewed to polar residues. Low complexity-rich tracts occupy residues 34-75 (IVIV…SSSS), 96-107 (SSPSSSPNTPKT), and 141-153 (TPTTTSTSTTPIK). Basic and acidic residues predominate over residues 154-167 (PVKDPKEKEKDLEN). The segment covering 186-292 (NNTNNNNNIN…QQSSPTSSQT (107 aa)) has biased composition (low complexity). Positions 420 to 433 (PNENNNGGSFQKPN) are enriched in polar residues. Composition is skewed to low complexity over residues 450 to 471 (GVSGSPSHSPRVSQSPRVPSHP), 553 to 564 (QQQQQQQQQSSS), 573 to 589 (SQPQNSSSPRQPSQTPQ), and 618 to 635 (HMPQSPHMPHSPHLMPHS). Over residues 678-695 (YGSSPNLNGGKGSNNFLQ) the composition is skewed to polar residues. Positions 712-723 (SSVDSYSNSSPT) are enriched in low complexity. A compositionally biased stretch (polar residues) spans 754–768 (ENYMSSPRQPLSPHN). The segment covering 785–797 (PHEHCNYIDKNDE) has biased composition (basic and acidic residues). Positions 798–863 (YYSNNNNNNN…NNNNNNNNII (66 aa)) are enriched in low complexity. Over residues 883-899 (LNINHQDGPNSASSTPR) the composition is skewed to polar residues.

This is an uncharacterized protein from Dictyostelium discoideum (Social amoeba).